Here is an 851-residue protein sequence, read N- to C-terminus: METKKQKQNPLVNVKALSMLFKVRGSFFKALDEIDFTVNEGDFFGVIGESGSGKSTTGKCLIRLNIPSGGKVEIANHLISGKKLTRENDHWLKQNVQMVFQDPYSSLNPTKNVLTVISEPLVITKTVYGEVKEYLKTLAKLSFKTKKELLREDFELETQFYEKFFSKVLFHLETTINKFALLQESNNNSSAELAQTILGHTDDLIEALRQEFGLVYEFSSSQSEPLQKALKDKQETLAQDTIDKLKQELYTTQQKAKVSTQAFATWQKLQQTKQNLKAYRAQMAEELQNKPRIYLNAWLLTTKNYIKDSRQNTQLTDDVFAFSYNDMVDKKRRLVLVLSEYYKALPYFYDNWIHQNADRFDELTNAVFFDLIDVVIALNRDFANVESDAKAELIRFVQFIRRLCDLRFAALKKSFKKQTNYSFDFNRETELLYANSCYDIKELPQVIQPYWEKLFSDANYDKIAKSVQELNDIISTDIEKASNIASEINTKISSFKTEIAELKATFKTEKKAEDHSAQITGLKTQIAEIQTQIKQQKREVQSTEKAALKPVLKQYKSALHLYKRFKQLLRQFTKQLNLLVKKQQELEKIEEGLDLTIWERIQLLFYPVEGDLKSELKTRLKSFGVINFEYKRAVRESRVFRLVHFGHDVMKWGLFLPLTKIFMRNKVYEALDSVGLKREHAYRYPHEFSGGQRQRIAIARALITKPKLIIADELISALDVSIQAQVINILKDLAKKHNLTVLFIAHDLSMVQTVCNRLIIMHRGKIVERGSTDEIFAHPVHPYTRSLIKASPKLSKINIDLASFDEKFTYDSDYSLTNMPSFLKVPNTQEHELYCTQGQFDSWIKGASRIN.

An ABC transporter domain is found at 14 to 788 (VKALSMLFKV…PVHPYTRSLI (775 aa)). Residue 48–55 (GESGSGKS) coordinates ATP.

It belongs to the ABC transporter superfamily. As to quaternary structure, the complex is composed of two ATP-binding proteins (OppD and OppF), two transmembrane proteins (OppB and OppC) and a solute-binding protein (OppA).

It is found in the cell membrane. The catalysed reaction is a [peptide](out) + ATP + H2O = a [peptide](in) + ADP + phosphate + H(+). Functionally, part of the ABC transporter complex OppABCDF involved in the uptake of oligopeptides. Probably responsible for energy coupling to the transport system. In Mycoplasma pneumoniae (strain ATCC 29342 / M129 / Subtype 1) (Mycoplasmoides pneumoniae), this protein is Oligopeptide transport ATP-binding protein OppF (oppF).